The following is a 671-amino-acid chain: DNA ligase (671 aa).

NAD(+)-binding positions include 32–36, 81–82, and Glu113; these read DAEYD and SL. Residue Lys115 is the N6-AMP-lysine intermediate of the active site. NAD(+) is bound by residues Arg136, Glu173, Lys290, and Lys314. Zn(2+) is bound by residues Cys408, Cys411, Cys426, and Cys432. Positions 593–671 constitute a BRCT domain; that stretch reads EIDSPFAGKT…EAEMIRLLGA (79 aa).

It belongs to the NAD-dependent DNA ligase family. LigA subfamily. The cofactor is Mg(2+). It depends on Mn(2+) as a cofactor.

It catalyses the reaction NAD(+) + (deoxyribonucleotide)n-3'-hydroxyl + 5'-phospho-(deoxyribonucleotide)m = (deoxyribonucleotide)n+m + AMP + beta-nicotinamide D-nucleotide.. In terms of biological role, DNA ligase that catalyzes the formation of phosphodiester linkages between 5'-phosphoryl and 3'-hydroxyl groups in double-stranded DNA using NAD as a coenzyme and as the energy source for the reaction. It is essential for DNA replication and repair of damaged DNA. The sequence is that of DNA ligase from Salmonella heidelberg (strain SL476).